The chain runs to 131 residues: Profilin-1 (131 aa).

C13 and C115 are joined by a disulfide. The short motif at 81–97 (AVIRGKKGSGGITVKKT) is the Involved in PIP2 interaction element. T111 carries the phosphothreonine modification.

It belongs to the profilin family. As to quaternary structure, multimer. Occurs in many kinds of cells as a complex with monomeric actin in a 1:1 ratio. Phosphorylated by MAP kinases. In terms of tissue distribution, pollen specific.

It localises to the cytoplasm. The protein resides in the cytoskeleton. Functionally, binds to actin and affects the structure of the cytoskeleton. At high concentrations, profilin prevents the polymerization of actin, whereas it enhances it at low concentrations. By binding to PIP2, it inhibits the formation of IP3 and DG. The protein is Profilin-1 (PRO1) of Zea mays (Maize).